We begin with the raw amino-acid sequence, 466 residues long: Ribulose bisphosphate carboxylase large chain (466 aa).

The residue at position 5 (lysine 5) is an N6,N6,N6-trimethyllysine. Substrate-binding residues include asparagine 114 and threonine 164. Lysine 166 serves as the catalytic Proton acceptor. Lysine 168 contributes to the substrate binding site. The Mg(2+) site is built by lysine 192, aspartate 194, and glutamate 195. Position 192 is an N6-carboxylysine (lysine 192). The Proton acceptor role is filled by histidine 285. The substrate site is built by arginine 286, histidine 318, and serine 370.

Belongs to the RuBisCO large chain family. Type I subfamily. As to quaternary structure, heterohexadecamer of 8 large chains and 8 small chains; disulfide-linked. The disulfide link is formed within the large subunit homodimers. It depends on Mg(2+) as a cofactor. The disulfide bond which can form in the large chain dimeric partners within the hexadecamer appears to be associated with oxidative stress and protein turnover.

The protein localises to the plastid. It localises to the chloroplast. The catalysed reaction is 2 (2R)-3-phosphoglycerate + 2 H(+) = D-ribulose 1,5-bisphosphate + CO2 + H2O. It carries out the reaction D-ribulose 1,5-bisphosphate + O2 = 2-phosphoglycolate + (2R)-3-phosphoglycerate + 2 H(+). RuBisCO catalyzes two reactions: the carboxylation of D-ribulose 1,5-bisphosphate, the primary event in carbon dioxide fixation, as well as the oxidative fragmentation of the pentose substrate in the photorespiration process. Both reactions occur simultaneously and in competition at the same active site. The protein is Ribulose bisphosphate carboxylase large chain of Gonopterodendron arboreum (Maracaibo lignum-vitae).